The primary structure comprises 82 residues: Small ribosomal subunit protein uS17 (82 aa).

This sequence belongs to the universal ribosomal protein uS17 family. As to quaternary structure, part of the 30S ribosomal subunit.

One of the primary rRNA binding proteins, it binds specifically to the 5'-end of 16S ribosomal RNA. This chain is Small ribosomal subunit protein uS17, found in Azorhizobium caulinodans (strain ATCC 43989 / DSM 5975 / JCM 20966 / LMG 6465 / NBRC 14845 / NCIMB 13405 / ORS 571).